Reading from the N-terminus, the 105-residue chain is Large ribosomal subunit protein bL21 (105 aa).

This sequence belongs to the bacterial ribosomal protein bL21 family. As to quaternary structure, part of the 50S ribosomal subunit. Contacts protein L20.

Functionally, this protein binds to 23S rRNA in the presence of protein L20. The polypeptide is Large ribosomal subunit protein bL21 (Dictyoglomus turgidum (strain DSM 6724 / Z-1310)).